A 387-amino-acid chain; its full sequence is Acyltransferase MdmB (387 aa).

The next 10 membrane-spanning stretches (helical) occupy residues 8–28 (LPSL…CHIA), 45–65 (ITTL…FVLA), 85–105 (IYPL…SLAE), 139–161 (TPSW…YRLV), 170–190 (WWCA…TSQF), 209–229 (CWLP…ALIL), 236–256 (GPGV…TQVV), 258–278 (PMFT…TALA), 292–312 (AVLV…FMVI), and 336–356 (ALAL…HTVV).

This sequence belongs to the acyltransferase 3 family.

It localises to the cell membrane. Functionally, catalyzes the acylation of the mycaminose sugar during midecamycin biosynthesis. In Streptomyces mycarofaciens, this protein is Acyltransferase MdmB (mdmB).